The following is a 185-amino-acid chain: Ribulose bisphosphate carboxylase small subunit, chloroplastic 2 (185 aa).

The transit peptide at 1–45 directs the protein to the chloroplast; the sequence is MAAVIAKSSVSAAVARPARSSVRPMAALKPAVKAAPVAAPAQANQ. Met46 carries the N-methylmethionine modification.

This sequence belongs to the RuBisCO small chain family. Heterohexadecamer of 8 large and 8 small subunits.

Its subcellular location is the plastid. The protein resides in the chloroplast. It is found in the chloroplast stroma. Functionally, ruBisCO catalyzes two reactions: the carboxylation of D-ribulose 1,5-bisphosphate, the primary event in carbon dioxide fixation, as well as the oxidative fragmentation of the pentose substrate. Both reactions occur simultaneously and in competition at the same active site. Although the small subunit is not catalytic it is essential for maximal activity. This chain is Ribulose bisphosphate carboxylase small subunit, chloroplastic 2, found in Chlamydomonas reinhardtii (Chlamydomonas smithii).